The sequence spans 93 residues: Small ribosomal subunit protein uS19 (93 aa).

Belongs to the universal ribosomal protein uS19 family.

Protein S19 forms a complex with S13 that binds strongly to the 16S ribosomal RNA. The polypeptide is Small ribosomal subunit protein uS19 (Mycobacteroides abscessus (strain ATCC 19977 / DSM 44196 / CCUG 20993 / CIP 104536 / JCM 13569 / NCTC 13031 / TMC 1543 / L948) (Mycobacterium abscessus)).